Consider the following 454-residue polypeptide: NADP-specific glutamate dehydrogenase 1 (454 aa).

K110 is an active-site residue. 174 to 203 (GVLTGKGLNWGGSLIRPEATGYGLVYYTQA) provides a ligand contact to NAD(+).

Belongs to the Glu/Leu/Phe/Val dehydrogenases family. In terms of assembly, homohexamer.

It carries out the reaction L-glutamate + NADP(+) + H2O = 2-oxoglutarate + NH4(+) + NADPH + H(+). This Saccharomyces uvarum (strain ATCC 76518 / CBS 7001 / CLIB 283 / NBRC 10550 / MCYC 623 / NCYC 2669 / NRRL Y-11845) (Yeast) protein is NADP-specific glutamate dehydrogenase 1 (GDH1).